Here is a 122-residue protein sequence, read N- to C-terminus: Large ribosomal subunit protein uL14 (122 aa).

This sequence belongs to the universal ribosomal protein uL14 family. As to quaternary structure, part of the 50S ribosomal subunit. Forms a cluster with proteins L3 and L19. In the 70S ribosome, L14 and L19 interact and together make contacts with the 16S rRNA in bridges B5 and B8.

Binds to 23S rRNA. Forms part of two intersubunit bridges in the 70S ribosome. This is Large ribosomal subunit protein uL14 from Ureaplasma parvum serovar 3 (strain ATCC 27815 / 27 / NCTC 11736).